A 122-amino-acid chain; its full sequence is Ribosome-binding factor A (122 aa).

Belongs to the RbfA family. As to quaternary structure, monomer. Binds 30S ribosomal subunits, but not 50S ribosomal subunits or 70S ribosomes.

Its subcellular location is the cytoplasm. Its function is as follows. One of several proteins that assist in the late maturation steps of the functional core of the 30S ribosomal subunit. Associates with free 30S ribosomal subunits (but not with 30S subunits that are part of 70S ribosomes or polysomes). Required for efficient processing of 16S rRNA. May interact with the 5'-terminal helix region of 16S rRNA. The sequence is that of Ribosome-binding factor A from Burkholderia thailandensis (strain ATCC 700388 / DSM 13276 / CCUG 48851 / CIP 106301 / E264).